The primary structure comprises 346 residues: Dihydroorotate dehydrogenase (quinone) (346 aa).

Residues 61-65 (AGLDK) and threonine 85 each bind FMN. Lysine 65 is a binding site for substrate. A substrate-binding site is contributed by 110–114 (NRMGF). Residues asparagine 138 and asparagine 171 each coordinate FMN. Asparagine 171 is a binding site for substrate. The Nucleophile role is filled by serine 174. Asparagine 176 contributes to the substrate binding site. FMN is bound by residues lysine 216 and threonine 244. Substrate is bound at residue 245–246 (NT). FMN-binding positions include glycine 267, glycine 296, and 317–318 (YS).

It belongs to the dihydroorotate dehydrogenase family. Type 2 subfamily. As to quaternary structure, monomer. It depends on FMN as a cofactor.

Its subcellular location is the cell membrane. It catalyses the reaction (S)-dihydroorotate + a quinone = orotate + a quinol. Its pathway is pyrimidine metabolism; UMP biosynthesis via de novo pathway; orotate from (S)-dihydroorotate (quinone route): step 1/1. Functionally, catalyzes the conversion of dihydroorotate to orotate with quinone as electron acceptor. The sequence is that of Dihydroorotate dehydrogenase (quinone) from Marinomonas sp. (strain MWYL1).